A 358-amino-acid polypeptide reads, in one-letter code: C-C chemokine receptor type 3 (358 aa).

Over 1–43 the chain is Extracellular; sequence MATYPEEAELETEFPGTTFYDYEFAQPCFKVSITDLGAQFLPS. Residues 44 to 64 traverse the membrane as a helical segment; sequence LFSLVFIVGLLGNITVIVVLT. The Cytoplasmic segment spans residues 65-74; the sequence is KYQKLKIMTN. The helical transmembrane segment at 75–95 threads the bilayer; that stretch reads IYLLNLAISDLLFLFTLPFWT. At 96–112 the chain is on the extracellular side; it reads YYVHWNKWVFGHFMCKI. A helical transmembrane segment spans residues 113–133; the sequence is ISGLYYVGLFSEIFFIILLTI. The Cytoplasmic portion of the chain corresponds to 134 to 154; the sequence is DRYLAIVHAVFALRTRTVTFG. A helical membrane pass occupies residues 155–175; the sequence is IITSVITWVLAVLAALPEFMF. Topologically, residues 176 to 206 are extracellular; the sequence is YGTQGHFEVLFCGPSYPEKKEHHWKRFQALR. The chain crosses the membrane as a helical span at residues 207-227; the sequence is MNIFGLALPLLIMIICYTGII. The Cytoplasmic portion of the chain corresponds to 228–243; it reads KTLLRCPSKKKYKAIR. Residues 244 to 264 form a helical membrane-spanning segment; sequence LIFVIMVVFFVFWTPYNLLLL. Residues 265 to 287 lie on the Extracellular side of the membrane; the sequence is FSAFDLSFLDDCERSKQLDMAKH. A helical transmembrane segment spans residues 288-308; that stretch reads VTEVIAHTHCCINPIIYAFVG. The Cytoplasmic segment spans residues 309 to 358; the sequence is ERFQKYLRHFLHRNVTMHLSKYIPFFTSEKLERSSSISPSSGDPELSVVF.

Belongs to the G-protein coupled receptor 1 family.

It localises to the cell membrane. Functionally, receptor for C-C type chemokine. Binds and responds to a variety of chemokines, including CCL11, CCL26, CCL7, CCL13, RANTES(CCL5) and CCL15. Subsequently transduces a signal by increasing the intracellular calcium ions level. In addition acts as a possible functional receptor for NARS1. The polypeptide is C-C chemokine receptor type 3 (CCR3) (Cavia porcellus (Guinea pig)).